A 156-amino-acid polypeptide reads, in one-letter code: ATP synthase subunit b (156 aa).

The helical transmembrane segment at 13–33 (AFIIFVWFCMKFVWPPLMNAI) threads the bilayer.

It belongs to the ATPase B chain family. As to quaternary structure, F-type ATPases have 2 components, F(1) - the catalytic core - and F(0) - the membrane proton channel. F(1) has five subunits: alpha(3), beta(3), gamma(1), delta(1), epsilon(1). F(0) has three main subunits: a(1), b(2) and c(10-14). The alpha and beta chains form an alternating ring which encloses part of the gamma chain. F(1) is attached to F(0) by a central stalk formed by the gamma and epsilon chains, while a peripheral stalk is formed by the delta and b chains.

Its subcellular location is the cell inner membrane. In terms of biological role, f(1)F(0) ATP synthase produces ATP from ADP in the presence of a proton or sodium gradient. F-type ATPases consist of two structural domains, F(1) containing the extramembraneous catalytic core and F(0) containing the membrane proton channel, linked together by a central stalk and a peripheral stalk. During catalysis, ATP synthesis in the catalytic domain of F(1) is coupled via a rotary mechanism of the central stalk subunits to proton translocation. Its function is as follows. Component of the F(0) channel, it forms part of the peripheral stalk, linking F(1) to F(0). This chain is ATP synthase subunit b, found in Shewanella sediminis (strain HAW-EB3).